Consider the following 258-residue polypeptide: Phosphoprotein ECPP44 (258 aa).

Disordered stretches follow at residues 1-25 (MASD…DRGL), 46-131 (EKVQ…PVEV), and 148-175 (KLPG…VDCA). Composition is skewed to basic and acidic residues over residues 11 to 25 (SVEK…DRGL), 46 to 80 (EKVQ…EKLH), 109 to 124 (GLKE…KEED), and 148 to 158 (KLPGGGKKVEE).

It belongs to the plant dehydrin family. Post-translationally, phosphorylated in embryogenic and somatic embryos. Not phosphorylated in non-embryogenic cells.

Phosphorylation of ECCP44 protein is thought to be involved in the acquisition of embryogenic competence. Unlike other dehydrins, it is not thought to function as an environmental stress tolerant. This chain is Phosphoprotein ECPP44 (ECPP44), found in Daucus carota (Wild carrot).